A 49-amino-acid polypeptide reads, in one-letter code: Large ribosomal subunit protein bL33 (49 aa).

Belongs to the bacterial ribosomal protein bL33 family.

This is Large ribosomal subunit protein bL33 from Lactiplantibacillus plantarum (strain ATCC BAA-793 / NCIMB 8826 / WCFS1) (Lactobacillus plantarum).